Reading from the N-terminus, the 99-residue chain is DNA-binding protein Fis (99 aa).

Residues 75 to 94 (QTRAAIMMGINRGTLRKKLK) constitute a DNA-binding region (H-T-H motif).

This sequence belongs to the transcriptional regulatory Fis family. In terms of assembly, homodimer.

In terms of biological role, activates ribosomal RNA transcription. Plays a direct role in upstream activation of rRNA promoters. This Tolumonas auensis (strain DSM 9187 / NBRC 110442 / TA 4) protein is DNA-binding protein Fis.